The following is a 503-amino-acid chain: Legumin J (503 aa).

A signal peptide spans 1-22 (MSKPFLSLLSLSLLLFASACLA). Disulfide bonds link C33–C66 and C109–C329. Residues 38–257 (INALEPDHRV…TFNTEEDTAK (220 aa)) form the Cupin type-1 1 domain. Disordered stretches follow at residues 111–140 (ETYEEPRSSQSRQESRQQQGDSHQKVRRFR), 185–235 (FYLG…EGNS), and 253–323 (EDTA…RKNG). Low complexity predominate over residues 118-129 (SSQSRQESRQQQ). Composition is skewed to basic and acidic residues over residues 254–268 (DTAKRLRSPRDERSQ) and 282–300 (KGKEEEEKEQSHSHSHREE). Acidic residues predominate over residues 301 to 312 (KEEEEEEEEDEE). The segment covering 313 to 323 (EKQRSEERKNG) has biased composition (basic and acidic residues). Positions 335-482 (ENIADAARAD…AFGLRQRQVT (148 aa)) constitute a Cupin type-1 2 domain.

It belongs to the 11S seed storage protein (globulins) family. As to quaternary structure, hexamer; each subunit is composed of an acidic and a basic chain derived from a single precursor and linked by a disulfide bond.

This protein found in the seeds of many leguminous and non-leguminous plants is the source of sulfur-containing amino acids in seed meals. The polypeptide is Legumin J (LEGJ) (Pisum sativum (Garden pea)).